The sequence spans 199 residues: Biogenesis of lysosome-related organelles complex 1 subunit 3 (199 aa).

Positions M1–L11 are enriched in basic residues. The segment at M1–V81 is disordered. The segment covering A23 to L38 has biased composition (acidic residues). The span at Y39–R54 shows a compositional bias: low complexity. T62 is modified (phosphothreonine). S64 carries the phosphoserine modification.

The protein belongs to the BLOC1S3 family. Component of the biogenesis of lysosome-related organelles complex 1 (BLOC-1) composed of BLOC1S1, BLOC1S2, BLOC1S3, BLOC1S4, BLOC1S5, BLOC1S6, DTNBP1/BLOC1S7 and SNAPIN/BLOC1S8. Octamer composed of one copy each BLOC1S1, BLOC1S2, BLOC1S3, BLOC1S4, BLOC1S5, BLOC1S6, DTNBP1/BLOC1S7 and SNAPIN/BLOC1S8. The BLOC-1 complex associates with the AP-3 protein complex and membrane protein cargos. Interacts directly with BLOC1S2. Interacts with BLOC1S4, BLOC1S5 and BLOC1S6. Post-translationally, phosphorylated.

It localises to the cytoplasm. Component of the BLOC-1 complex, a complex that is required for normal biogenesis of lysosome-related organelles (LRO), such as platelet dense granules and melanosomes. In concert with the AP-3 complex, the BLOC-1 complex is required to target membrane protein cargos into vesicles assembled at cell bodies for delivery into neurites and nerve terminals. The BLOC-1 complex, in association with SNARE proteins, is also proposed to be involved in neurite extension. Plays a role in intracellular vesicle trafficking. The chain is Biogenesis of lysosome-related organelles complex 1 subunit 3 (BLOC1S3) from Sus scrofa (Pig).